Consider the following 180-residue polypeptide: Ribosome maturation factor RimM (180 aa).

Residues Glu-104–Leu-177 form the PRC barrel domain.

It belongs to the RimM family. In terms of assembly, binds ribosomal protein uS19.

It is found in the cytoplasm. Its function is as follows. An accessory protein needed during the final step in the assembly of 30S ribosomal subunit, possibly for assembly of the head region. Essential for efficient processing of 16S rRNA. May be needed both before and after RbfA during the maturation of 16S rRNA. It has affinity for free ribosomal 30S subunits but not for 70S ribosomes. The protein is Ribosome maturation factor RimM of Synechococcus sp. (strain CC9902).